A 189-amino-acid polypeptide reads, in one-letter code: Protein GrpE (189 aa).

Polar residues predominate over residues 1 to 10; the sequence is MADEQQQTLD. The segment at 1–21 is disordered; the sequence is MADEQQQTLDPQAPEQTDAPE.

It belongs to the GrpE family. As to quaternary structure, homodimer.

The protein resides in the cytoplasm. In terms of biological role, participates actively in the response to hyperosmotic and heat shock by preventing the aggregation of stress-denatured proteins, in association with DnaK and GrpE. It is the nucleotide exchange factor for DnaK and may function as a thermosensor. Unfolded proteins bind initially to DnaJ; upon interaction with the DnaJ-bound protein, DnaK hydrolyzes its bound ATP, resulting in the formation of a stable complex. GrpE releases ADP from DnaK; ATP binding to DnaK triggers the release of the substrate protein, thus completing the reaction cycle. Several rounds of ATP-dependent interactions between DnaJ, DnaK and GrpE are required for fully efficient folding. This Pseudomonas paraeruginosa (strain DSM 24068 / PA7) (Pseudomonas aeruginosa (strain PA7)) protein is Protein GrpE.